Consider the following 288-residue polypeptide: Diaminopimelate epimerase (288 aa).

Substrate is bound by residues asparagine 13, glutamine 46, and asparagine 66. Cysteine 75 functions as the Proton donor in the catalytic mechanism. Residues 76–77 (GN), asparagine 166, asparagine 199, and 217–218 (ER) contribute to the substrate site. Cysteine 226 functions as the Proton acceptor in the catalytic mechanism. A substrate-binding site is contributed by 227–228 (GT).

This sequence belongs to the diaminopimelate epimerase family. Homodimer.

The protein localises to the cytoplasm. The enzyme catalyses (2S,6S)-2,6-diaminopimelate = meso-2,6-diaminopimelate. It participates in amino-acid biosynthesis; L-lysine biosynthesis via DAP pathway; DL-2,6-diaminopimelate from LL-2,6-diaminopimelate: step 1/1. Its function is as follows. Catalyzes the stereoinversion of LL-2,6-diaminopimelate (L,L-DAP) to meso-diaminopimelate (meso-DAP), a precursor of L-lysine and an essential component of the bacterial peptidoglycan. The protein is Diaminopimelate epimerase of Cupriavidus taiwanensis (strain DSM 17343 / BCRC 17206 / CCUG 44338 / CIP 107171 / LMG 19424 / R1) (Ralstonia taiwanensis (strain LMG 19424)).